A 167-amino-acid polypeptide reads, in one-letter code: uncharacterized protein (167 aa).

A divalent metal cation is bound by residues His-48, His-127, and His-131.

The protein belongs to the DinB family.

This is an uncharacterized protein from Bacillus subtilis (strain 168).